The sequence spans 676 residues: Methionine--tRNA ligase (676 aa).

Positions 15 to 25 (PYANGSIHLGH) match the 'HIGH' region motif. Residues C146, C149, C159, and C162 each coordinate Zn(2+). A 'KMSKS' region motif is present at residues 332–336 (KMSKS). An ATP-binding site is contributed by K335. Positions 574-676 (DFAKVDMRIA…SGAQPGMQVK (103 aa)) constitute a tRNA-binding domain.

It belongs to the class-I aminoacyl-tRNA synthetase family. MetG type 1 subfamily. As to quaternary structure, homodimer. The cofactor is Zn(2+).

It localises to the cytoplasm. The enzyme catalyses tRNA(Met) + L-methionine + ATP = L-methionyl-tRNA(Met) + AMP + diphosphate. Is required not only for elongation of protein synthesis but also for the initiation of all mRNA translation through initiator tRNA(fMet) aminoacylation. This is Methionine--tRNA ligase from Pectobacterium atrosepticum (strain SCRI 1043 / ATCC BAA-672) (Erwinia carotovora subsp. atroseptica).